The primary structure comprises 377 residues: Caspase-4 (377 aa).

The tract at residues 1 to 59 is required for LPS-binding; sequence MAEDKHNKNPLKMLESLGKELISGLLDDFVEKNVLKLEEEEKKKIYDAKLQDKARVLVD. The propeptide occupies 1–80; it reads MAEDKHNKNP…VFVQTFLNID (80 aa). A CARD domain is found at 1–91; the sequence is MAEDKHNKNP…NSTSIKAPEE (91 aa). Serine 83 bears the Phosphoserine mark. Residues histidine 210 and cysteine 258 contribute to the active site. The propeptide occupies 271 to 289; that stretch reads SPPALADSFSQSSENLEED.

The protein belongs to the peptidase C14A family. As to quaternary structure, heterotetramer that consists of two anti-parallel arranged heterodimers, each one formed by a 20 kDa (Caspase-4 subunit p20) and a 10 kDa (Caspase-4 subunit p10) subunit. Upon direct LPS-binding, forms large homooligomers, resulting in its activation. These oligomers are often referred to as 'non-canonical inflammasomes'. In its precursor form, interacts with TMEM214; this interaction is required for association with the endoplasmic reticulum membrane. Interacts with CASP1. Interacts with NOD2. Interacts with Serpinb1a, Serpinb1b and Serpinb1c; these interactions regulate CASP4 activity. In terms of assembly, heterotetramer that consists of two anti-parallel arranged heterodimers, each one formed by a 20 kDa (Caspase-4 subunit p20) and a 10 kDa (Caspase-4 subunit p10) subunit. In terms of processing, in response to activation signals, undergoes autoproteolytic cleavage and activation.

Its subcellular location is the cytoplasm. The protein resides in the cytosol. It is found in the endoplasmic reticulum membrane. It localises to the mitochondrion. The protein localises to the inflammasome. Its subcellular location is the secreted. It catalyses the reaction Strict requirement for Asp at the P1 position. It has a preferred cleavage sequence of Tyr-Val-Ala-Asp-|- but also cleaves at Asp-Glu-Val-Asp-|-.. With respect to regulation, activated by homooligomerization induced by direct binding to cytosolic LPS, in a TLR4-independent manner. In addition to LPS, CASP4/CASP11 may also be activated by oxidized phospholipid 1-palmitoyl-2-arachidonoyl- sn-glycero-3-phosphorylcholine, an oxidized phospholipid (oxPAPC), in dendritic cells, promoting adaptive immunity. The role of oxPAPC is however unclear and another report suggests that oxPAPC competes with LPS-binding and inhibits the non-canonical inflammasome in macrophages. Its function is as follows. Inflammatory caspase that acts as the effector of the non-canonical inflammasome by mediating lipopolysaccharide (LPS)-induced pyroptosis. Also indirectly activates the NLRP3 and NLRP6 inflammasomes. Acts as a thiol protease that cleaves a tetrapeptide after an Asp residue at position P1: catalyzes cleavage of CGAS, GSDMD and IL18. Effector of the non-canonical inflammasome independently of NLRP3 inflammasome and CASP1: the non-canonical inflammasome promotes pyroptosis through GSDMD cleavage without involving secretion of cytokine IL1B. In the non-canonical inflammasome, CASP4 is activated by direct binding to the lipid A moiety of LPS without the need of an upstream sensor. LPS-binding promotes CASP4 activation and CASP4-mediated cleavage of GSDMD and IL18, followed by IL18 secretion through the GSDMD pore, pyroptosis of infected cells and their extrusion into the gut lumen. Also indirectly promotes secretion of mature cytokines (IL1A and HMGB1) downstream of GSDMD-mediated pyroptosis via activation of the NLRP3 and NLRP6 inflammasomes. Involved in NLRP3-dependent CASP1 activation and IL1B secretion in response to non-canonical activators, such as UVB radiation or cholera enterotoxin. Involved in NLRP6 inflammasome-dependent activation in response to lipoteichoic acid (LTA), a cell-wall component of Gram-positive bacteria, which leads to CASP1 activation and IL1B secretion. Involved in LPS-induced IL6 secretion; this activity may not require caspase enzymatic activity. The non-canonical inflammasome is required for innate immunity to cytosolic, but not vacuolar, bacteria. Plays a crucial role in the restriction of S.typhimurium replication in colonic epithelial cells during infection. Pyroptosis limits bacterial replication, while cytokine secretion promotes the recruitment and activation of immune cells and triggers mucosal inflammation. May also act as an activator of adaptive immunity in dendritic cells, following activation by oxidized phospholipid 1-palmitoyl-2-arachidonoyl- sn-glycero-3-phosphorylcholine, an oxidized phospholipid (oxPAPC). Cleavage of GSDMD is not strictly dependent on the consensus cleavage site but depends on an exosite interface on CASP4 that recognizes and binds the Gasdermin-D, C-terminal (GSDMD-CT) part. Catalyzes cleavage and maturation of IL18; IL18 processing also depends of the exosite interface on CASP4. In contrast, it does not directly process IL1B. During non-canonical inflammasome activation, cuts CGAS and may play a role in the regulation of antiviral innate immune activation. The polypeptide is Caspase-4 (CASP4) (Bos taurus (Bovine)).